The sequence spans 902 residues: AP-4 complex accessory subunit RUSC1 (902 aa).

Disordered regions lie at residues 31–67 (ELQE…SNSP), 81–155 (LENR…PGTC), 189–227 (QDVP…KTEP), and 247–450 (KTTE…AQAG). A compositionally biased stretch (low complexity) spans 94–112 (AASPSDPGCSSSLSSCSDL). The segment covering 249-261 (TENNNTGWKNNGN) has biased composition (low complexity). The segment covering 277 to 289 (WKTNTRITDSGSK) has biased composition (polar residues). Residues 291–309 (DAGKIDGGWRSDVSEEPVP) are compositionally biased toward basic and acidic residues. Composition is skewed to pro residues over residues 381-390 (PAPPVPPRDP) and 398-407 (PPRPPPPPVP). Residues 433 to 450 (PAAGEEAPAAKEPGAQAG) are compositionally biased toward low complexity. An interaction with TRAF6 region spans residues 470–605 (MAEAQSGTGQ…FHAFILGLLN (136 aa)). The 145-residue stretch at 522 to 666 (DVGHLVLTTL…LTFHLDLLFE (145 aa)) folds into the RUN domain. Positions 606-672 (TKQLELWFSS…LLFEHHHHLP (67 aa)) are interaction with IKBKG. Disordered regions lie at residues 706–729 (LRGT…PGSW) and 747–776 (GFPL…TDEM). The SH3 domain occupies 844–902 (QTHRAVRALCDHTAARPDQLSFRRGEVLRVITTVDEDWLRCGRDGMEGLVPVGYTSLVL).

In terms of assembly, associated component of the adapter-like complex 4 (AP-4). Interacts with IKBKG and TRAF6. Interacts with F-actin, acetylated actin, TUBB3, STX1A, KIF5B and KLC1. In terms of processing, phosphorylated on serine residues following nuclear translocation. Polyubiquitinated; polyubiquitination involves TRAF6. In terms of tissue distribution, predominantly expressed in brain.

It localises to the cytoplasm. It is found in the nucleus. The protein resides in the cytoskeleton. The protein localises to the cytoplasmic vesicle. Its subcellular location is the early endosome. It localises to the postsynaptic density. It is found in the golgi apparatus. Its function is as follows. Associates with the adapter-like complex 4 (AP-4) and may therefore play a role in vesicular trafficking of proteins at the trans-Golgi network. Signaling adapter which plays a role in neuronal differentiation. Involved in regulation of NGF-dependent neurite outgrowth. May play a role in neuronal vesicular trafficking, specifically involving pre-synaptic membrane proteins. Seems to be involved in signaling pathways that are regulated by the prolonged activation of MAPK. Can regulate the polyubiquitination of IKBKG and thus may be involved in regulation of the NF-kappa-B pathway. In Homo sapiens (Human), this protein is AP-4 complex accessory subunit RUSC1.